A 181-amino-acid chain; its full sequence is Large ribosomal subunit protein uL5 (181 aa).

This sequence belongs to the universal ribosomal protein uL5 family. Part of the 50S ribosomal subunit; contacts the 5S rRNA and probably tRNA. Forms a bridge to the 30S subunit in the 70S ribosome.

Functionally, this is one of the proteins that bind and probably mediate the attachment of the 5S RNA into the large ribosomal subunit, where it forms part of the central protuberance. In the 70S ribosome it contacts protein S13 of the 30S subunit (bridge B1b), connecting the 2 subunits; this bridge is implicated in subunit movement. May contact the P site tRNA; the 5S rRNA and some of its associated proteins might help stabilize positioning of ribosome-bound tRNAs. The polypeptide is Large ribosomal subunit protein uL5 (Methanococcus maripaludis (strain C6 / ATCC BAA-1332)).